A 286-amino-acid polypeptide reads, in one-letter code: Merozoite surface protein 2 (286 aa).

The signal sequence occupies residues 1–20 (MKVIKTLSIINFFIFVTFNI). N-linked (GlcNAc...) asparagine glycosylation is found at N22 and N36. Positions 43–248 (MTESKTPTPT…SQKECTDGNK (206 aa)) are disordered. The polymorphic region stretch occupies residues 44–212 (TESKTPTPTG…EQTESPELQS (169 aa)). A compositionally biased stretch (gly residues) spans 54-68 (AGAGASGSAGSGDGA). Copy 1 of the repeat occupies 59–68 (SGSAGSGDGA). The 5 X 10 AA tandem repeats of S-G-S-A-[GS]-[GS]-[AD]-G-A stretch occupies residues 59-106 (SGSAGSGDGASGSASGSASGSASGSAGASGSASGSAGASGSASGSAGA). Residues 69–76 (SGSASGSA) form a 2; partial repeat. Positions 69–137 (SGSASGSASG…STSTSSENPN (69 aa)) are enriched in low complexity. 3 consecutive repeat copies span residues 77-86 (SGSASGSAGA), 88-96 (GSASGSAGA), and 97-106 (SGSASGSAGA). Composition is skewed to polar residues over residues 153–179 (KPNQ…NVPP) and 186–214 (KSPT…QSAP). N-linked (GlcNAc...) asparagine glycosylation occurs at N163. N-linked (GlcNAc...) asparagine glycosylation is present at N235. Residues 239–248 (SQKECTDGNK) show a composition bias toward basic and acidic residues. C243 and C251 are joined by a disulfide. N259 and N260 each carry an N-linked (GlcNAc...) asparagine glycan. The GPI-anchor amidated asparagine moiety is linked to residue N260. A propeptide spans 261 to 286 (SSNIASINKFVVLISATLVLSFAIFI) (removed in mature form).

Its subcellular location is the cell membrane. May play a role in the merozoite attachment to the erythrocyte. This chain is Merozoite surface protein 2, found in Plasmodium falciparum (isolate 311).